A 540-amino-acid polypeptide reads, in one-letter code: CTP synthase (540 aa).

Residues 1–267 (MKIMKFIFIT…GKLVTKKLNL (267 aa)) are amidoligase domain. Ser-15 is a binding site for CTP. Residue Ser-15 participates in UTP binding. 16-21 (SLGKGI) is a binding site for ATP. Tyr-56 is an L-glutamine binding site. Residue Asp-73 coordinates ATP. Residues Asp-73 and Glu-141 each contribute to the Mg(2+) site. CTP contacts are provided by residues 148–150 (DIE), 188–193 (KTKPTQ), and Lys-224. UTP-binding positions include 188-193 (KTKPTQ) and Lys-224. Residue 240-242 (RDA) coordinates ATP. The region spanning 292 to 540 (TIGIVGKYVE…VRASLGEKIK (249 aa)) is the Glutamine amidotransferase type-1 domain. Residue Gly-360 coordinates L-glutamine. The Nucleophile; for glutamine hydrolysis role is filled by Cys-387. L-glutamine is bound by residues 388 to 391 (MGMQ), Glu-411, and Arg-468. Catalysis depends on residues His-513 and Glu-515.

This sequence belongs to the CTP synthase family. As to quaternary structure, homotetramer.

The enzyme catalyses UTP + L-glutamine + ATP + H2O = CTP + L-glutamate + ADP + phosphate + 2 H(+). It catalyses the reaction L-glutamine + H2O = L-glutamate + NH4(+). The catalysed reaction is UTP + NH4(+) + ATP = CTP + ADP + phosphate + 2 H(+). It functions in the pathway pyrimidine metabolism; CTP biosynthesis via de novo pathway; CTP from UDP: step 2/2. With respect to regulation, allosterically activated by GTP, when glutamine is the substrate; GTP has no effect on the reaction when ammonia is the substrate. The allosteric effector GTP functions by stabilizing the protein conformation that binds the tetrahedral intermediate(s) formed during glutamine hydrolysis. Inhibited by the product CTP, via allosteric rather than competitive inhibition. In terms of biological role, catalyzes the ATP-dependent amination of UTP to CTP with either L-glutamine or ammonia as the source of nitrogen. Regulates intracellular CTP levels through interactions with the four ribonucleotide triphosphates. In Methanocaldococcus jannaschii (strain ATCC 43067 / DSM 2661 / JAL-1 / JCM 10045 / NBRC 100440) (Methanococcus jannaschii), this protein is CTP synthase.